Here is a 79-residue protein sequence, read N- to C-terminus: Putative Fis-like DNA-binding protein (79 aa).

A DNA-binding region (H-T-H motif) is located at residues glutamine 55–isoleucine 74.

The protein belongs to the transcriptional regulatory Fis family.

The protein is Putative Fis-like DNA-binding protein of Neisseria meningitidis serogroup A / serotype 4A (strain DSM 15465 / Z2491).